The chain runs to 310 residues: tRNA dimethylallyltransferase (310 aa).

Residue 13-20 (GPTASGKT) coordinates ATP. 15 to 20 (TASGKT) provides a ligand contact to substrate. 4 interaction with substrate tRNA regions span residues 38-41 (DSAL), 162-166 (QRLSR), 243-248 (RCVGYR), and 276-283 (KRQITWLR).

This sequence belongs to the IPP transferase family. In terms of assembly, monomer. It depends on Mg(2+) as a cofactor.

It carries out the reaction adenosine(37) in tRNA + dimethylallyl diphosphate = N(6)-dimethylallyladenosine(37) in tRNA + diphosphate. Functionally, catalyzes the transfer of a dimethylallyl group onto the adenine at position 37 in tRNAs that read codons beginning with uridine, leading to the formation of N6-(dimethylallyl)adenosine (i(6)A). The chain is tRNA dimethylallyltransferase from Aliivibrio fischeri (strain MJ11) (Vibrio fischeri).